Here is a 341-residue protein sequence, read N- to C-terminus: Putative UPF0607 protein FLJ37424 (341 aa).

Disordered regions lie at residues 72–131 and 216–283; these read PKTE…NPRP and GLLM…LPCL. Positions 79–101 are enriched in basic and acidic residues; sequence EEPKEATEVKDQVETQGQEDNKR. Polar residues predominate over residues 108-127; sequence EAASTSRPLETQGNLTSSWY. The span at 243 to 252 shows a compositional bias: basic residues; sequence AGHRSHKRKL.

It belongs to the UPF0607 family.

In Homo sapiens (Human), this protein is Putative UPF0607 protein FLJ37424.